Consider the following 136-residue polypeptide: Protein PsiE (136 aa).

4 helical membrane passes run 15–35, 55–75, 83–103, and 108–128; these read ILQN…VVFL, YELV…ALIV, HFPL…LIIV, and PMDV…LWLC.

Belongs to the PsiE family.

It is found in the cell inner membrane. The sequence is that of Protein PsiE from Salmonella gallinarum (strain 287/91 / NCTC 13346).